The primary structure comprises 308 residues: tRNA dimethylallyltransferase (308 aa).

14–21 lines the ATP pocket; the sequence is GPTASGKT. 16-21 contributes to the substrate binding site; it reads TASGKT. Interaction with substrate tRNA regions lie at residues 39-42, 163-167, and 244-249; these read DSAL, QRLSR, and RCVGYR.

Belongs to the IPP transferase family. Monomer. It depends on Mg(2+) as a cofactor.

The enzyme catalyses adenosine(37) in tRNA + dimethylallyl diphosphate = N(6)-dimethylallyladenosine(37) in tRNA + diphosphate. Functionally, catalyzes the transfer of a dimethylallyl group onto the adenine at position 37 in tRNAs that read codons beginning with uridine, leading to the formation of N6-(dimethylallyl)adenosine (i(6)A). This is tRNA dimethylallyltransferase from Shewanella baltica (strain OS185).